The following is a 188-amino-acid chain: Acireductone dioxygenase 1 (188 aa).

Residues histidine 90, histidine 92, glutamate 96, and histidine 135 each coordinate Fe(2+). Ni(2+)-binding residues include histidine 90, histidine 92, glutamate 96, and histidine 135.

It belongs to the acireductone dioxygenase (ARD) family. It depends on Fe(2+) as a cofactor. Ni(2+) is required as a cofactor.

It is found in the cytoplasm. The protein localises to the nucleus. It catalyses the reaction 1,2-dihydroxy-5-(methylsulfanyl)pent-1-en-3-one + O2 = 4-methylsulfanyl-2-oxobutanoate + formate + 2 H(+). The catalysed reaction is 1,2-dihydroxy-5-(methylsulfanyl)pent-1-en-3-one + O2 = 3-(methylsulfanyl)propanoate + CO + formate + 2 H(+). The protein operates within amino-acid biosynthesis; L-methionine biosynthesis via salvage pathway; L-methionine from S-methyl-5-thio-alpha-D-ribose 1-phosphate: step 5/6. In terms of biological role, catalyzes 2 different reactions between oxygen and the acireductone 1,2-dihydroxy-3-keto-5-methylthiopentene (DHK-MTPene) depending upon the metal bound in the active site. Fe-containing acireductone dioxygenase (Fe-ARD) produces formate and 2-keto-4-methylthiobutyrate (KMTB), the alpha-ketoacid precursor of methionine in the methionine recycle pathway. Ni-containing acireductone dioxygenase (Ni-ARD) produces methylthiopropionate, carbon monoxide and formate, and does not lie on the methionine recycle pathway. The chain is Acireductone dioxygenase 1 from Vitis vinifera (Grape).